Consider the following 91-residue polypeptide: Small ribosomal subunit protein uS19 (91 aa).

Belongs to the universal ribosomal protein uS19 family.

Protein S19 forms a complex with S13 that binds strongly to the 16S ribosomal RNA. This is Small ribosomal subunit protein uS19 from Halorhodospira halophila (strain DSM 244 / SL1) (Ectothiorhodospira halophila (strain DSM 244 / SL1)).